We begin with the raw amino-acid sequence, 299 residues long: Recombination-associated protein RdgC (299 aa).

This sequence belongs to the RdgC family.

It is found in the cytoplasm. The protein localises to the nucleoid. Functionally, may be involved in recombination. The chain is Recombination-associated protein RdgC from Neisseria meningitidis serogroup C (strain 053442).